Consider the following 63-residue polypeptide: Large ribosomal subunit protein bL35 (63 aa).

Belongs to the bacterial ribosomal protein bL35 family.

This Thermobifida fusca (strain YX) protein is Large ribosomal subunit protein bL35.